Reading from the N-terminus, the 339-residue chain is Transmembrane protein 120B (339 aa).

Positions 1–67 form a coiled coil; the sequence is MSGQLERCER…KHTLQRYKRH (67 aa). A run of 6 helical transmembrane segments spans residues 102 to 124, 132 to 152, 159 to 179, 187 to 207, 270 to 290, and 302 to 322; these read GLYLNLVLGNVSVTLLSNQAKFA, FKLYLTIILLLGAVACRFVLH, VFNFLLVWYYCTLTIRESILI, GWWVSHHYVSTFLSGVMLTWP, FLLPFLFCGHFWQLYNAVTLF, and QVFVLALTFLILFLGNFLTTL.

This sequence belongs to the TMEM120 family. Heterooligomer with TMEM120A. In terms of tissue distribution, expressed in inguinal and subcutaneous white adipose tissue and in brown adipose tissue.

The protein localises to the nucleus inner membrane. In terms of biological role, necessary for efficient adipogenesis. Does not show ion channel activity. This is Transmembrane protein 120B from Mus musculus (Mouse).